Reading from the N-terminus, the 236-residue chain is Purine nucleoside phosphorylase DeoD-type (236 aa).

His4 lines the a purine D-ribonucleoside pocket. Phosphate-binding positions include Gly20, Arg24, Arg43, and 87–90 (RVGT). A purine D-ribonucleoside contacts are provided by residues 178 to 180 (EME) and 202 to 203 (SD). Asp203 acts as the Proton donor in catalysis.

It belongs to the PNP/UDP phosphorylase family. Homohexamer; trimer of homodimers.

It carries out the reaction a purine D-ribonucleoside + phosphate = a purine nucleobase + alpha-D-ribose 1-phosphate. It catalyses the reaction a purine 2'-deoxy-D-ribonucleoside + phosphate = a purine nucleobase + 2-deoxy-alpha-D-ribose 1-phosphate. In terms of biological role, catalyzes the reversible phosphorolytic breakdown of the N-glycosidic bond in the beta-(deoxy)ribonucleoside molecules, with the formation of the corresponding free purine bases and pentose-1-phosphate. The sequence is that of Purine nucleoside phosphorylase DeoD-type from Geobacillus kaustophilus (strain HTA426).